The primary structure comprises 185 residues: Elongation factor P (185 aa).

This sequence belongs to the elongation factor P family.

Its subcellular location is the cytoplasm. It functions in the pathway protein biosynthesis; polypeptide chain elongation. Its function is as follows. Involved in peptide bond synthesis. Stimulates efficient translation and peptide-bond synthesis on native or reconstituted 70S ribosomes in vitro. Probably functions indirectly by altering the affinity of the ribosome for aminoacyl-tRNA, thus increasing their reactivity as acceptors for peptidyl transferase. The sequence is that of Elongation factor P from Dechloromonas aromatica (strain RCB).